A 177-amino-acid polypeptide reads, in one-letter code: Co-chaperone protein HscB homolog (177 aa).

One can recognise a J domain in the interval 8–80 (DYFSLFGMPR…LSRAQYLLEL (73 aa)).

The protein belongs to the HscB family. As to quaternary structure, interacts with HscA and stimulates its ATPase activity.

Its function is as follows. Co-chaperone involved in the maturation of iron-sulfur cluster-containing proteins. Seems to help targeting proteins to be folded toward HscA. This is Co-chaperone protein HscB homolog from Azoarcus sp. (strain BH72).